The primary structure comprises 506 residues: Sucrose transport protein SUT3 (506 aa).

At 1–20 the chain is on the cytoplasmic side; it reads MAVDMELDGGGDGKGKAPPQ. The helical transmembrane segment at 21 to 41 threads the bilayer; it reads ISLSGLFLACMVAGGVQYGWA. Residues 42–54 lie on the Extracellular side of the membrane; it reads LQLSLLTPYVQTL. A helical transmembrane segment spans residues 55 to 75; it reads GIPHALTSVMWLCGPIAGLIV. Residues 76–94 lie on the Cytoplasmic side of the membrane; the sequence is QPCVGLYSDKCTSSLGRRR. Residues 95-115 traverse the membrane as a helical segment; sequence PFILTGCIIICISVIVIGFSS. At 116-135 the chain is on the extracellular side; it reads DIGYALGDTTEDCKVYRGPR. A helical membrane pass occupies residues 136–156; that stretch reads YHAAAAFILGFWLLDFSNNTV. Residues 157 to 171 are Cytoplasmic-facing; sequence QGPARALMADLSGRH. A helical transmembrane segment spans residues 172–192; the sequence is GPSAANAIFCSWMALGNILGY. Residues 193-220 are Extracellular-facing; it reads SSGSTNDWHKWFPFLMTRACCEACANLK. The chain crosses the membrane as a helical span at residues 221–241; it reads AAFLVAVVFLGLSTAVTMVFA. Over 242-275 the chain is Cytoplasmic; sequence REVALDPVAAAKRNEGEASGLLAVFKGMKNLPVG. A helical transmembrane segment spans residues 276-296; it reads MPSVLIVTGLTWLSWFPFILF. Residues 297-327 are Extracellular-facing; it reads DTDWMGREIYHGRPDGSPAEVTAFQEGVRQG. Residues 328–348 traverse the membrane as a helical segment; the sequence is AFGLLLNSIVLGISSFLIEPM. Residues 349–355 are Cytoplasmic-facing; sequence CRRLGAR. A helical transmembrane segment spans residues 356-376; that stretch reads AVWVMSSAVVCVAMAAVSVLS. At 377 to 404 the chain is on the extracellular side; the sequence is AWSLGDFGGSVQDAARAPAEEGGVRASA. Residues 405–425 traverse the membrane as a helical segment; the sequence is LALFVFLGLPFAVLCSVPFAV. At 426–441 the chain is on the cytoplasmic side; the sequence is TAQLAASRGGGQGLCT. A helical transmembrane segment spans residues 442–462; the sequence is GVLNISIVVPQMAIALGAGPW. The Extracellular segment spans residues 463–470; the sequence is DELFGEGN. A helical transmembrane segment spans residues 471 to 491; that stretch reads IPAFAMASVFAAAAAAAGVVL. Over 492–506 the chain is Cytoplasmic; it reads LPKVSVRSVSMAGGH.

This sequence belongs to the glycoside-pentoside-hexuronide (GPH) cation symporter transporter (TC 2.A.2.4) family. Homodimer. As to expression, widely expressed. Highest expression in sink leaves and lowest in germinating seeds.

It is found in the cell membrane. It functions in the pathway glycan biosynthesis; sucrose metabolism. In terms of biological role, responsible for the transport of sucrose into the cell, with the concomitant uptake of protons (symport system). May also transport other glucosides. This Oryza sativa subsp. japonica (Rice) protein is Sucrose transport protein SUT3 (SUT3).